The following is a 133-amino-acid chain: MYAENYKRFLELIEKLREFEGALIVEGLRDEVALRNLGVRAEIIRLSRLPLAEIALIASRYREVMILTDFDRKGEELAKKLVSYLEGYPCRVDVETRRELKRIAKKDIKGVEELYGLYMKVVSVSDPQLEGFQ.

The Toprim domain occupies 20 to 100 (EGALIVEGLR…RVDVETRREL (81 aa)). Glu26, Asp69, and Asp71 together coordinate Mg(2+).

This sequence belongs to the UPF0292 family. Mg(2+) serves as cofactor.

This is UPF0292 protein TGAM_1777 from Thermococcus gammatolerans (strain DSM 15229 / JCM 11827 / EJ3).